The sequence spans 314 residues: Epithelial-stromal interaction protein 1 (314 aa).

Disordered stretches follow at residues 1–72 (MYPR…PNET), 200–219 (NRSACNIAPPAAQSSRWKLP), 225–267 (PSRA…HQEE), and 292–314 (SQPGGVEQSGGCWNMNSTDGWGI). Residues 43–58 (AEPKGPKLERQGHGDQ) are compositionally biased toward basic and acidic residues. Positions 71–180 (ETRRQKIQRI…QEDIRRATLR (110 aa)) form a coiled coil. Over residues 232–267 (AHKDSPQKEDNQKLQKTRDGHQKNKLLETKGQHQEE) the composition is skewed to basic and acidic residues. The segment covering 305-314 (NMNSTDGWGI) has biased composition (polar residues).

Functionally, plays a role in M1 macrophage polarization and is required for the proper regulation of gene expression during M1 versus M2 macrophage differentiation. Might play a role in RELA/p65 and STAT1 phosphorylation and nuclear localization upon activation of macrophages. The sequence is that of Epithelial-stromal interaction protein 1 (Epsti1) from Rattus norvegicus (Rat).